The chain runs to 179 residues: Probable chemoreceptor glutamine deamidase CheD 2 (179 aa).

Belongs to the CheD family.

The catalysed reaction is L-glutaminyl-[protein] + H2O = L-glutamyl-[protein] + NH4(+). Its function is as follows. Probably deamidates glutamine residues to glutamate on methyl-accepting chemotaxis receptors (MCPs), playing an important role in chemotaxis. In Ruegeria sp. (strain TM1040) (Silicibacter sp.), this protein is Probable chemoreceptor glutamine deamidase CheD 2.